Here is a 688-residue protein sequence, read N- to C-terminus: MGYSLGYIGEHWEEYRAVLYIVLLLPVLIHFLIRRKTQLSNSDKSSEKKDEVKKQREVKRFKRVGKRGKIGSPSSSIRKQNDTIDWKNSPLCVFYSTLGGTAERYAKQVHEELSSLLQRDDIQLLNLDYVDLSEYFVSCPENAIYLVVLPSYEIESSIDYYLSSLQESFSDFRVPKDPLHGLSGYAVFGLGDMENYPGDKFCYQAIQADKWIKKLGARRLAPLGVVNTQLAPTAQIDALLQWTRSVAECLKNGTLLKIGNTDSLSSDVMDVEDMGSMMAKAKAEAALPVGTKEMVSTESPTYKALTKQGYSVVGSHSGVKICRWTKSAMRGRGFCYKYSFYGIRSHLCMEATPSLACANKCTFCWRHGTNPVGTSWRWKVDPPEMILQGILKAHYAKLKLMKGVPGVLPDRYEEASRVRHCALSLVGEPIFYPYINEFVSMLHEREISSFLVTNAQHPEALRNMGMVTQLYVSVDASTKQSLKSVDRPLFKDFWERMLTCLEILREKRQRTVYRMTLVKGFNMEQIKEYTELIRLGVPCFIEVKGVTYSGNSDQSPLTMKNVPYYEEVIDFVKKLIEYIDIHLQDLGVRYEIAAEHAHSCSILVAQTAFKKDGHWHTHIDYPKFFELIRTKKDFGPFDYMASTPDFAMFGNGGFSPEDTRFHRKKKTQTSKPISATISETATISEAAA.

The 157-residue stretch at 91 to 247 (LCVFYSTLGG…ALLQWTRSVA (157 aa)) folds into the Flavodoxin-like domain. FMN is bound by residues 97-101 (TLGGT) and 187-221 (VFGL…RRLA). The Radical SAM core domain maps to 341-580 (YGIRSHLCME…FVKKLIEYID (240 aa)). Residues cysteine 357, cysteine 361, and cysteine 364 each coordinate [4Fe-4S] cluster.

It belongs to the TYW1 family. It depends on [4Fe-4S] cluster as a cofactor.

The enzyme catalyses N(1)-methylguanosine(37) in tRNA(Phe) + pyruvate + S-adenosyl-L-methionine = 4-demethylwyosine(37) in tRNA(Phe) + 5'-deoxyadenosine + L-methionine + CO2 + H2O. Its pathway is tRNA modification; wybutosine-tRNA(Phe) biosynthesis. Its function is as follows. Probable component of the wybutosine biosynthesis pathway. Wybutosine is a hyper modified guanosine with a tricyclic base found at the 3'-position adjacent to the anticodon of eukaryotic phenylalanine tRNA. Catalyzes the condensation of N-methylguanine with 2 carbon atoms from pyruvate to form the tricyclic 4-demethylwyosine, an intermediate in wybutosine biosynthesis. The sequence is that of S-adenosyl-L-methionine-dependent tRNA 4-demethylwyosine synthase (tyw1) from Schizosaccharomyces pombe (strain 972 / ATCC 24843) (Fission yeast).